The following is a 677-amino-acid chain: Bargin (677 aa).

2 stretches are compositionally biased toward low complexity: residues 1 to 13 and 29 to 39; these read MDRG…TPAV and APHAAAGPDGQ. 2 disordered regions span residues 1-39 and 168-190; these read MDRG…PDGQ and SQAT…HSHT. In terms of domain architecture, BAR spans 25-270; the sequence is EEAAAPHAAA…RENHGQADHS (246 aa). Ser183, Ser270, and Ser272 each carry phosphoserine. One can recognise a Rho-GAP domain in the interval 284–477; the sequence is VSLATHLQEL…ALIQSADTLF (194 aa). Positions 504-577 are disordered; sequence SEELPSTAVP…DMARRSTGSL (74 aa). Pro residues predominate over residues 516–530; it reads ATTPAPAPAPAPAPA. A phosphoserine mark is found at Ser552 and Ser558. Residues 574-677 form a mediates non-covalent binding of poly-ubiquitin chains region; that stretch reads TGSLAAAVET…IADLTEGLED (104 aa).

In terms of tissue distribution, expressed in brain (at protein level).

It localises to the cell membrane. The protein localises to the cytoplasm. The protein resides in the cytosol. Functionally, GTPase activating protein (GAP) which specifically converts GTP-bound RAC1 and CDC42 in their inactive GDP-bound form. The GAP activity is enhanced by the non-covalent binding of K-29 and K-48 polyubiquitin chains. This Homo sapiens (Human) protein is Bargin.